Here is a 107-residue protein sequence, read N- to C-terminus: 4-carboxymethyl-4-methylbutenolide mutase (107 aa).

H26 serves as the catalytic Proton donor/acceptor. 2 residues coordinate 3-methylmuconolactone: H26 and Y39. 4-methylmuconolactone contacts are provided by H26 and Y39.

This sequence belongs to the MmlI family. Homodimer.

The enzyme catalyses 4-methylmuconolactone = 3-methylmuconolactone. Its activity is regulated as follows. Inhibited by p-chloromercuribenzoate. Its function is as follows. Isomerase involved in the degradation of 4-methylsalicylate and 5-methylsalicylate. Catalyzes the isomerization of the dead-end metabolite 4-methylmuconolactone (4-ML) to 3-methylmuconolactone (3-ML), which can then be further degraded through a modified 3-oxoadipate pathway. Can also use 1-methylbislactone but not 3-methyl-cis,cis-muconate. This is 4-carboxymethyl-4-methylbutenolide mutase from Pseudomonas reinekei.